We begin with the raw amino-acid sequence, 762 residues long: 5-methyltetrahydropteroyltriglutamate--homocysteine methyltransferase (762 aa).

5-methyltetrahydropteroyltri-L-glutamate-binding positions include 17-20 and Lys111; that span reads REWK. L-homocysteine contacts are provided by residues 435–437 and Glu488; that span reads IGS. Residues 435-437 and Glu488 contribute to the L-methionine site; that span reads IGS. Residues 519–520 and Trp565 each bind 5-methyltetrahydropteroyltri-L-glutamate; that span reads RC. Asp603 contacts L-homocysteine. Residue Asp603 coordinates L-methionine. 5-methyltetrahydropteroyltri-L-glutamate is bound at residue Glu609. Zn(2+) is bound by residues His645, Cys647, and Glu669. The active-site Proton donor is His698. Residue Cys730 coordinates Zn(2+).

Belongs to the vitamin-B12 independent methionine synthase family. It depends on Zn(2+) as a cofactor.

It catalyses the reaction 5-methyltetrahydropteroyltri-L-glutamate + L-homocysteine = tetrahydropteroyltri-L-glutamate + L-methionine. The protein operates within amino-acid biosynthesis; L-methionine biosynthesis via de novo pathway; L-methionine from L-homocysteine (MetE route): step 1/1. Its function is as follows. Catalyzes the transfer of a methyl group from 5-methyltetrahydrofolate to homocysteine resulting in methionine formation. The chain is 5-methyltetrahydropteroyltriglutamate--homocysteine methyltransferase from Bacillus cereus (strain G9842).